Here is a 740-residue protein sequence, read N- to C-terminus: Ion-translocating oxidoreductase complex subunit C (740 aa).

4Fe-4S ferredoxin-type domains lie at 369–397 and 407–436; these read GEPQ…QQLY and KATT…VQYF. [4Fe-4S] cluster is bound by residues Cys377, Cys380, Cys383, Cys387, Cys416, Cys419, Cys422, and Cys426. The disordered stretch occupies residues 602–714; that stretch reads KLEQQQANAE…NAEPEEQIDP (113 aa). Positions 605–615 are enriched in low complexity; sequence QQQANAEPEQQ.

This sequence belongs to the 4Fe4S bacterial-type ferredoxin family. RnfC subfamily. As to quaternary structure, the complex is composed of six subunits: RsxA, RsxB, RsxC, RsxD, RsxE and RsxG. It depends on [4Fe-4S] cluster as a cofactor.

It localises to the cell inner membrane. Its function is as follows. Part of a membrane-bound complex that couples electron transfer with translocation of ions across the membrane. Required to maintain the reduced state of SoxR. The polypeptide is Ion-translocating oxidoreductase complex subunit C (Escherichia coli O17:K52:H18 (strain UMN026 / ExPEC)).